The primary structure comprises 354 residues: Short-chain dehydrogenase/reductase SAT2 (354 aa).

NADP(+) contacts are provided by Ile-31, Asp-85, Arg-201, and Val-233.

It belongs to the short-chain dehydrogenases/reductases (SDR) family.

It participates in mycotoxin biosynthesis. Functionally, short-chain dehydrogenase/reductase; part of the satratoxin SC1 cluster involved in the biosynthesis of satratoxins, trichothecene mycotoxins that are associated with human food poisonings. Satratoxins are suggested to be made by products of multiple gene clusters (SC1, SC2 and SC3) that encode 21 proteins in all, including polyketide synthases, acetyltransferases, and other enzymes expected to modify the trichothecene skeleton. SC1 encodes 10 proteins, SAT1 to SAT10. The largest are SAT8, which encodes a putative polyketide synthase (PKS) with a conventional non-reducing architecture, and SAT10, a putative protein containing four ankyrin repeats and thus may be involved in protein scaffolding. The putative short-chain reductase SAT3 may assist the PKS in some capacity. SAT6 contains a secretory lipase domain and acts probably as a trichothecene esterase. SAT5 encodes a putative acetyltransferase, and so, with SAT6, may affect endogenous protection from toxicity. The probable transcription factor SAT9 may regulate the expression of the SC1 cluster. SC2 encodes proteins SAT11 to SAT16, the largest of which encodes the putative reducing PKS SAT13. SAT11 is a cytochrome P450 monooxygenase, while SAT14 and SAT16 are probable acetyltransferases. The SC2 cluster may be regulated by the transcription factor SAT15. SC3 is a small cluster that encodes 5 proteins, SAT17 to SAT21. SAT21 is a putative MFS-type transporter which may have a role in exporting secondary metabolites. The four other proteins putatively encoded in SC3 include the taurine hydroxylase-like protein SAT17, the O-methyltransferase SAT18, the acetyltransferase SAT19, and the Cys6-type zinc finger SAT20, the latter being probably involved in regulation of SC3 expression. This chain is Short-chain dehydrogenase/reductase SAT2, found in Stachybotrys chartarum (strain CBS 109288 / IBT 7711) (Toxic black mold).